We begin with the raw amino-acid sequence, 153 residues long: NAD(P)H-quinone oxidoreductase subunit N (153 aa).

It belongs to the complex I NdhN subunit family. In terms of assembly, NDH-1 can be composed of about 15 different subunits; different subcomplexes with different compositions have been identified which probably have different functions.

It is found in the cellular thylakoid membrane. It catalyses the reaction a plastoquinone + NADH + (n+1) H(+)(in) = a plastoquinol + NAD(+) + n H(+)(out). It carries out the reaction a plastoquinone + NADPH + (n+1) H(+)(in) = a plastoquinol + NADP(+) + n H(+)(out). In terms of biological role, NDH-1 shuttles electrons from an unknown electron donor, via FMN and iron-sulfur (Fe-S) centers, to quinones in the respiratory and/or the photosynthetic chain. The immediate electron acceptor for the enzyme in this species is believed to be plastoquinone. Couples the redox reaction to proton translocation, and thus conserves the redox energy in a proton gradient. Cyanobacterial NDH-1 also plays a role in inorganic carbon-concentration. This is NAD(P)H-quinone oxidoreductase subunit N from Synechococcus sp. (strain CC9605).